The chain runs to 167 residues: Putative ripening-related protein 6 (167 aa).

A signal peptide spans 1–23 (MANAKQLALFAMLVLLLASCAAA). The segment at 28–57 (KPDPCDGGGGGVDSHLPPGMRRCSSPAVSE) is disordered.

The protein belongs to the kiwellin family.

Its subcellular location is the secreted. The protein is Putative ripening-related protein 6 of Oryza sativa subsp. japonica (Rice).